The sequence spans 74 residues: uncharacterized protein (74 aa).

This is an uncharacterized protein from Enterobacteria phage T4 (Bacteriophage T4).